We begin with the raw amino-acid sequence, 287 residues long: Protease HtpX (287 aa).

The next 2 membrane-spanning stretches (helical) occupy residues 4-24 and 33-53; these read IFLLIATNLAVLLVASIVMSI and GGLLVFAAIFGFGGAFISLAI. His139 is a Zn(2+) binding site. Residue Glu140 is part of the active site. His143 contacts Zn(2+). A run of 2 helical transmembrane segments spans residues 154-174 and 195-215; these read LIQGVVNTFVIFAARVVAGII and AVVFVLDMLFGILASIIVAYF. Residue Glu220 participates in Zn(2+) binding.

Belongs to the peptidase M48B family. It depends on Zn(2+) as a cofactor.

It is found in the cell inner membrane. The polypeptide is Protease HtpX (Shewanella sp. (strain MR-4)).